The chain runs to 423 residues: TPR repeat-containing protein YpiA (423 aa).

TPR repeat units lie at residues 33–66 (DEDK…YPNE), 67–100 (TELT…DPSY), 135–168 (PVID…QSEI), 171–204 (VNVH…NPDP), 238–271 (TSLY…DEYN), 272–305 (KELF…DPGF), 306–339 (VEAL…GEED), 340–373 (PKYN…YRED), and 374–407 (RDFL…DGAN).

As to quaternary structure, interacts with the RNA polymerase core.

The polypeptide is TPR repeat-containing protein YpiA (ypiA) (Bacillus subtilis (strain 168)).